We begin with the raw amino-acid sequence, 99 residues long: NADH-quinone oxidoreductase subunit K (99 aa).

The next 3 helical transmembrane spans lie at 3-23 (PDNY…GVLL), 28-48 (IVVF…FVAF), and 59-79 (VVAF…LAII).

Belongs to the complex I subunit 4L family. In terms of assembly, NDH-1 is composed of 14 different subunits. Subunits NuoA, H, J, K, L, M, N constitute the membrane sector of the complex.

The protein resides in the cell membrane. The catalysed reaction is a quinone + NADH + 5 H(+)(in) = a quinol + NAD(+) + 4 H(+)(out). In terms of biological role, NDH-1 shuttles electrons from NADH, via FMN and iron-sulfur (Fe-S) centers, to quinones in the respiratory chain. The immediate electron acceptor for the enzyme in this species is believed to be a menaquinone. Couples the redox reaction to proton translocation (for every two electrons transferred, four hydrogen ions are translocated across the cytoplasmic membrane), and thus conserves the redox energy in a proton gradient. This chain is NADH-quinone oxidoreductase subunit K, found in Mycobacterium sp. (strain JLS).